A 248-amino-acid chain; its full sequence is Adenosylcobinamide-GDP ribazoletransferase (248 aa).

A run of 6 helical transmembrane segments spans residues F36 to L56, F59 to G79, G114 to L134, Y137 to L157, I170 to L190, and A199 to L219.

The protein belongs to the CobS family. Mg(2+) serves as cofactor.

It localises to the cell membrane. It catalyses the reaction alpha-ribazole + adenosylcob(III)inamide-GDP = adenosylcob(III)alamin + GMP + H(+). The enzyme catalyses alpha-ribazole 5'-phosphate + adenosylcob(III)inamide-GDP = adenosylcob(III)alamin 5'-phosphate + GMP + H(+). It functions in the pathway cofactor biosynthesis; adenosylcobalamin biosynthesis; adenosylcobalamin from cob(II)yrinate a,c-diamide: step 7/7. Functionally, joins adenosylcobinamide-GDP and alpha-ribazole to generate adenosylcobalamin (Ado-cobalamin). Also synthesizes adenosylcobalamin 5'-phosphate from adenosylcobinamide-GDP and alpha-ribazole 5'-phosphate. This Clostridium botulinum (strain Langeland / NCTC 10281 / Type F) protein is Adenosylcobinamide-GDP ribazoletransferase.